We begin with the raw amino-acid sequence, 196 residues long: ATP-dependent Clp protease proteolytic subunit (196 aa).

The Nucleophile role is filled by Ser-98. His-123 is an active-site residue.

Belongs to the peptidase S14 family. In terms of assembly, fourteen ClpP subunits assemble into 2 heptameric rings which stack back to back to give a disk-like structure with a central cavity, resembling the structure of eukaryotic proteasomes.

Its subcellular location is the cytoplasm. The catalysed reaction is Hydrolysis of proteins to small peptides in the presence of ATP and magnesium. alpha-casein is the usual test substrate. In the absence of ATP, only oligopeptides shorter than five residues are hydrolyzed (such as succinyl-Leu-Tyr-|-NHMec, and Leu-Tyr-Leu-|-Tyr-Trp, in which cleavage of the -Tyr-|-Leu- and -Tyr-|-Trp bonds also occurs).. In terms of biological role, cleaves peptides in various proteins in a process that requires ATP hydrolysis. Has a chymotrypsin-like activity. Plays a major role in the degradation of misfolded proteins. The polypeptide is ATP-dependent Clp protease proteolytic subunit (Actinobacillus pleuropneumoniae serotype 5b (strain L20)).